The following is a 446-amino-acid chain: Pre-rRNA-processing protein crb3/ipi3 (446 aa).

WD repeat units lie at residues 74–113, 116–155, 172–214, 216–257, and 294–333; these read ILPE…LIYF, AHYQ…DQNS, GHKR…LLTT, ALPS…SNNV, and SCQS…VLRR.

The protein belongs to the WD repeat IPI3/WDR18 family. Component of the RIX1 complex, composed of ipi1, rix1/ipi2 and crb3/ipi3 in a 1:2:2 stoichiometry. The complex interacts (via rix1) with mdn1 (via its hexameric AAA ATPase ring) and the pre-60S ribosome particles. Interacts with rix1, gcr3 and Las1.

The protein resides in the nucleus. It is found in the chromosome. Its function is as follows. Required for both pre-rRNA processing and heterochromatic gene silencing. Component of the RIX1 complex required for processing of ITS2 sequences from 35S pre-rRNA. The sequence is that of Pre-rRNA-processing protein crb3/ipi3 (crb3) from Schizosaccharomyces pombe (strain 972 / ATCC 24843) (Fission yeast).